The sequence spans 660 residues: Bifunctional polymyxin resistance protein ArnA (660 aa).

The interval 1 to 304 (MKAVVFAYHD…TLGLVAGAII (304 aa)) is formyltransferase ArnAFT. The active-site Proton donor; for formyltransferase activity is the His104. Residues Arg114 and 136 to 140 (VSRAD) each bind (6R)-10-formyltetrahydrofolate. The tract at residues 314–660 (RRTRVLILGV…KTVELTEPQA (347 aa)) is dehydrogenase ArnADH. Residues Asp347 and 368–369 (DI) each bind NAD(+). Residues Ala393, Tyr398, and 432–433 (TS) contribute to the UDP-alpha-D-glucuronate site. The active-site Proton acceptor; for decarboxylase activity is the Glu434. UDP-alpha-D-glucuronate is bound by residues Arg460, Asn492, 526 to 535 (KLIDGGRQKR), and Tyr613. The active-site Proton donor; for decarboxylase activity is Arg619.

It in the N-terminal section; belongs to the Fmt family. UDP-L-Ara4N formyltransferase subfamily. In the C-terminal section; belongs to the NAD(P)-dependent epimerase/dehydratase family. UDP-glucuronic acid decarboxylase subfamily. In terms of assembly, homohexamer, formed by a dimer of trimers.

It carries out the reaction UDP-alpha-D-glucuronate + NAD(+) = UDP-beta-L-threo-pentopyranos-4-ulose + CO2 + NADH. It catalyses the reaction UDP-4-amino-4-deoxy-beta-L-arabinose + (6R)-10-formyltetrahydrofolate = UDP-4-deoxy-4-formamido-beta-L-arabinose + (6S)-5,6,7,8-tetrahydrofolate + H(+). It participates in nucleotide-sugar biosynthesis; UDP-4-deoxy-4-formamido-beta-L-arabinose biosynthesis; UDP-4-deoxy-4-formamido-beta-L-arabinose from UDP-alpha-D-glucuronate: step 1/3. It functions in the pathway nucleotide-sugar biosynthesis; UDP-4-deoxy-4-formamido-beta-L-arabinose biosynthesis; UDP-4-deoxy-4-formamido-beta-L-arabinose from UDP-alpha-D-glucuronate: step 3/3. Its pathway is bacterial outer membrane biogenesis; lipopolysaccharide biosynthesis. Its function is as follows. Bifunctional enzyme that catalyzes the oxidative decarboxylation of UDP-glucuronic acid (UDP-GlcUA) to UDP-4-keto-arabinose (UDP-Ara4O) and the addition of a formyl group to UDP-4-amino-4-deoxy-L-arabinose (UDP-L-Ara4N) to form UDP-L-4-formamido-arabinose (UDP-L-Ara4FN). The modified arabinose is attached to lipid A and is required for resistance to polymyxin and cationic antimicrobial peptides. This chain is Bifunctional polymyxin resistance protein ArnA, found in Enterobacter sp. (strain 638).